A 92-amino-acid polypeptide reads, in one-letter code: Small ribosomal subunit protein uS19 (92 aa).

It belongs to the universal ribosomal protein uS19 family.

Functionally, protein S19 forms a complex with S13 that binds strongly to the 16S ribosomal RNA. In Methylobacterium sp. (strain 4-46), this protein is Small ribosomal subunit protein uS19.